Here is a 150-residue protein sequence, read N- to C-terminus: Large ribosomal subunit protein bL9 (150 aa).

The protein belongs to the bacterial ribosomal protein bL9 family.

Functionally, binds to the 23S rRNA. The polypeptide is Large ribosomal subunit protein bL9 (Sodalis glossinidius (strain morsitans)).